Here is a 283-residue protein sequence, read N- to C-terminus: Pantothenate synthetase (283 aa).

30 to 37 (MGNLHDGH) contacts ATP. The Proton donor role is filled by histidine 37. Glutamine 61 serves as a coordination point for (R)-pantoate. Residue glutamine 61 coordinates beta-alanine. Residue 149–152 (GEKD) participates in ATP binding. Glutamine 155 is a binding site for (R)-pantoate. 186-189 (LSSR) contacts ATP.

The protein belongs to the pantothenate synthetase family. In terms of assembly, homodimer.

Its subcellular location is the cytoplasm. It catalyses the reaction (R)-pantoate + beta-alanine + ATP = (R)-pantothenate + AMP + diphosphate + H(+). Its pathway is cofactor biosynthesis; (R)-pantothenate biosynthesis; (R)-pantothenate from (R)-pantoate and beta-alanine: step 1/1. Catalyzes the condensation of pantoate with beta-alanine in an ATP-dependent reaction via a pantoyl-adenylate intermediate. This chain is Pantothenate synthetase, found in Shigella dysenteriae serotype 1 (strain Sd197).